The chain runs to 357 residues: Ribosomal RNA large subunit methyltransferase M (357 aa).

Residues Ser183, Ala216 to Gly219, Asp235, Asp255, and Asp271 each bind S-adenosyl-L-methionine. Lys300 acts as the Proton acceptor in catalysis.

The protein belongs to the class I-like SAM-binding methyltransferase superfamily. RNA methyltransferase RlmE family. RlmM subfamily. Monomer.

Its subcellular location is the cytoplasm. It carries out the reaction cytidine(2498) in 23S rRNA + S-adenosyl-L-methionine = 2'-O-methylcytidine(2498) in 23S rRNA + S-adenosyl-L-homocysteine + H(+). In terms of biological role, catalyzes the 2'-O-methylation at nucleotide C2498 in 23S rRNA. In Pseudomonas fluorescens (strain ATCC BAA-477 / NRRL B-23932 / Pf-5), this protein is Ribosomal RNA large subunit methyltransferase M.